We begin with the raw amino-acid sequence, 404 residues long: XK-related protein 8 (404 aa).

The next 8 membrane-spanning stretches (helical) occupy residues 14 to 34, 44 to 64, 169 to 189, 209 to 229, 232 to 252, 262 to 282, 293 to 313, and 324 to 344; these read FVFSVIGACTFLVDWGSDVWL, VTWFWVLVGLMALSSFVVQTF, AVQFVSIAASTTSIAWMVVDY, LIYFLWNLLLIAPRVAALALC, VLSGYMAAHFLMLWSAFALWA, SVAGEWLYRATVGLIWYFSWF, SAIYHSFISTDGAILLATWWC, and ALALLIALPLFHFLGLLFKAL.

This sequence belongs to the XK family.

The protein resides in the cell membrane. It carries out the reaction a 1,2-diacyl-sn-glycero-3-phospho-L-serine(in) = a 1,2-diacyl-sn-glycero-3-phospho-L-serine(out). Its function is as follows. Phospholipid scramblase that promotes phosphatidylserine exposure on apoptotic cell surface, possibly by mediating phospholipid scrambling. Phosphatidylserine is a specific marker only present at the surface of apoptotic cells and acts as a specific signal for engulfment. This Gasterosteus aculeatus (Three-spined stickleback) protein is XK-related protein 8.